The chain runs to 474 residues: Probable cytosol aminopeptidase (474 aa).

Residues K237 and D242 each coordinate Mn(2+). K249 is a catalytic residue. Mn(2+) is bound by residues D260, D319, and E321. R323 is an active-site residue.

This sequence belongs to the peptidase M17 family. Requires Mn(2+) as cofactor.

Its subcellular location is the cytoplasm. The enzyme catalyses Release of an N-terminal amino acid, Xaa-|-Yaa-, in which Xaa is preferably Leu, but may be other amino acids including Pro although not Arg or Lys, and Yaa may be Pro. Amino acid amides and methyl esters are also readily hydrolyzed, but rates on arylamides are exceedingly low.. The catalysed reaction is Release of an N-terminal amino acid, preferentially leucine, but not glutamic or aspartic acids.. Presumably involved in the processing and regular turnover of intracellular proteins. Catalyzes the removal of unsubstituted N-terminal amino acids from various peptides. This chain is Probable cytosol aminopeptidase, found in Helicobacter hepaticus (strain ATCC 51449 / 3B1).